Consider the following 301-residue polypeptide: Lipoyl synthase (301 aa).

Cys53, Cys58, Cys64, Cys79, Cys83, Cys86, and Ser290 together coordinate [4Fe-4S] cluster. Residues 65 to 279 enclose the Radical SAM core domain; sequence WSRKTATYML…RIYGKSIGFK (215 aa).

It belongs to the radical SAM superfamily. Lipoyl synthase family. Requires [4Fe-4S] cluster as cofactor.

It is found in the cytoplasm. It carries out the reaction [[Fe-S] cluster scaffold protein carrying a second [4Fe-4S](2+) cluster] + N(6)-octanoyl-L-lysyl-[protein] + 2 oxidized [2Fe-2S]-[ferredoxin] + 2 S-adenosyl-L-methionine + 4 H(+) = [[Fe-S] cluster scaffold protein] + N(6)-[(R)-dihydrolipoyl]-L-lysyl-[protein] + 4 Fe(3+) + 2 hydrogen sulfide + 2 5'-deoxyadenosine + 2 L-methionine + 2 reduced [2Fe-2S]-[ferredoxin]. It functions in the pathway protein modification; protein lipoylation via endogenous pathway; protein N(6)-(lipoyl)lysine from octanoyl-[acyl-carrier-protein]: step 2/2. Catalyzes the radical-mediated insertion of two sulfur atoms into the C-6 and C-8 positions of the octanoyl moiety bound to the lipoyl domains of lipoate-dependent enzymes, thereby converting the octanoylated domains into lipoylated derivatives. This chain is Lipoyl synthase, found in Leptospira interrogans serogroup Icterohaemorrhagiae serovar Lai (strain 56601).